The primary structure comprises 389 residues: Phenylpropanoylacetyl-CoA synthase (389 aa).

Residue cysteine 163 is part of the active site.

It belongs to the thiolase-like superfamily. Chalcone/stilbene synthases family. Homodimer. As to expression, expressed in both the leaf and rhizome, with higher expression in the rhizome.

The catalysed reaction is (E)-feruloyl-CoA + malonyl-CoA + H(+) = (E)-feruloylacetyl-CoA + CO2 + CoA. It catalyses the reaction 4-coumaroyl-CoA + malonyl-CoA + H(+) = (4-coumaroyl)acetyl-CoA + CO2 + CoA. Its pathway is secondary metabolite biosynthesis; flavonoid biosynthesis. Catalyzes the formation of feruloyldiketide-CoA by condensing feruloyl-CoA and malonyl-CoA in the curcuminoid biosynthesis. Has no activity with cinnamoyl-CoA. The chain is Phenylpropanoylacetyl-CoA synthase (DCS) from Curcuma longa (Turmeric).